The following is a 541-amino-acid chain: Chaperonin GroEL (541 aa).

Residues 29 to 32 (TLGP), 86 to 90 (DGTTT), G413, 477 to 479 (DAL), and D493 contribute to the ATP site.

Belongs to the chaperonin (HSP60) family. As to quaternary structure, forms a cylinder of 14 subunits composed of two heptameric rings stacked back-to-back. Interacts with the co-chaperonin GroES.

The protein resides in the cytoplasm. The catalysed reaction is ATP + H2O + a folded polypeptide = ADP + phosphate + an unfolded polypeptide.. In terms of biological role, together with its co-chaperonin GroES, plays an essential role in assisting protein folding. The GroEL-GroES system forms a nano-cage that allows encapsulation of the non-native substrate proteins and provides a physical environment optimized to promote and accelerate protein folding. The protein is Chaperonin GroEL of Clostridium botulinum (strain Loch Maree / Type A3).